Reading from the N-terminus, the 219-residue chain is MTQDELKKAVGWAALDYVRPDTIVGVGTGSTAAHFIDALGSIKHQIKGAVSSSDASTEKLKSLGIPVFDANDVDSLDVYVDGADEINGHMQMIKGGGAALTREKIISALSRQFICIVDASKQVDVLGKFPLPVEVIPMARSYVARELVKLGGQPEYRQGVVTDNGNVILDVHNLNIMDAVAVENHINGIAGVVTVGLFANRGADVALVGTADGVKTVTK.

Substrate-binding positions include 28-31, 81-84, and 94-97; these read TGST, DGAD, and KGGG. The Proton acceptor role is filled by Glu-103. Residue Lys-121 participates in substrate binding.

The protein belongs to the ribose 5-phosphate isomerase family. In terms of assembly, homodimer.

The enzyme catalyses aldehydo-D-ribose 5-phosphate = D-ribulose 5-phosphate. The protein operates within carbohydrate degradation; pentose phosphate pathway; D-ribose 5-phosphate from D-ribulose 5-phosphate (non-oxidative stage): step 1/1. Functionally, catalyzes the reversible conversion of ribose-5-phosphate to ribulose 5-phosphate. This Pectobacterium atrosepticum (strain SCRI 1043 / ATCC BAA-672) (Erwinia carotovora subsp. atroseptica) protein is Ribose-5-phosphate isomerase A.